The primary structure comprises 301 residues: Protoheme IX farnesyltransferase (301 aa).

The next 9 membrane-spanning stretches (helical) occupy residues 20-42 (FTEL…GMWL), 55-75 (VDVI…SGAF), 105-125 (ALMV…MTTW), 126-146 (QAGV…SLYA), 150-172 (LVSN…WFAV), 176-198 (FSIV…FYAI), 227-247 (MFFW…LGIV), 249-269 (VILA…GFKM), and 280-300 (FVYS…ISIF).

It belongs to the UbiA prenyltransferase family. Protoheme IX farnesyltransferase subfamily. Interacts with CtaA.

Its subcellular location is the cell membrane. It carries out the reaction heme b + (2E,6E)-farnesyl diphosphate + H2O = Fe(II)-heme o + diphosphate. It participates in porphyrin-containing compound metabolism; heme O biosynthesis; heme O from protoheme: step 1/1. Its function is as follows. Converts heme B (protoheme IX) to heme O by substitution of the vinyl group on carbon 2 of heme B porphyrin ring with a hydroxyethyl farnesyl side group. This chain is Protoheme IX farnesyltransferase, found in Listeria monocytogenes serovar 1/2a (strain ATCC BAA-679 / EGD-e).